Reading from the N-terminus, the 476-residue chain is Trigger factor (476 aa).

A PPIase FKBP-type domain is found at 174 to 261 (GDIAVVSFKG…LKDLKEKELP (88 aa)). The disordered stretch occupies residues 436–476 (KENTTKTSKTTKNSKTTKATKTTKTTKTTKTSKTQNKKEKK). A compositionally biased stretch (low complexity) spans 440–469 (TKTSKTTKNSKTTKATKTTKTTKTTKTSKT).

Belongs to the FKBP-type PPIase family. Tig subfamily.

It localises to the cytoplasm. It carries out the reaction [protein]-peptidylproline (omega=180) = [protein]-peptidylproline (omega=0). Functionally, involved in protein export. Acts as a chaperone by maintaining the newly synthesized protein in an open conformation. Functions as a peptidyl-prolyl cis-trans isomerase. The polypeptide is Trigger factor (Prochlorococcus marinus (strain MIT 9215)).